A 66-amino-acid polypeptide reads, in one-letter code: uncharacterized protein (66 aa).

The segment at 1–21 (MPGGDRTGPWGQGPRTGRRAG) is disordered.

This is an uncharacterized protein from Archaeoglobus fulgidus (strain ATCC 49558 / DSM 4304 / JCM 9628 / NBRC 100126 / VC-16).